The following is a 131-amino-acid chain: Ribonuclease VapC30 (131 aa).

Positions 1-129 constitute a PINc domain; it reads MVIDTSALVA…FQHTDIATVA (129 aa). Aspartate 4 and aspartate 99 together coordinate Mg(2+).

Belongs to the PINc/VapC protein family. The cofactor is Mg(2+).

In terms of biological role, toxic component of a type II toxin-antitoxin (TA) system. An RNase. Its toxic effect is neutralized by coexpression with cognate antitoxin VapB30. In Mycobacterium tuberculosis (strain CDC 1551 / Oshkosh), this protein is Ribonuclease VapC30.